The chain runs to 143 residues: Probable cyclic pyranopterin monophosphate synthase (143 aa).

Residues 61-63 and 97-98 contribute to the substrate site; these read MCH and ME. D112 is a catalytic residue.

The protein belongs to the MoaC family. As to quaternary structure, homohexamer; trimer of dimers.

The enzyme catalyses (8S)-3',8-cyclo-7,8-dihydroguanosine 5'-triphosphate = cyclic pyranopterin phosphate + diphosphate. It functions in the pathway cofactor biosynthesis; molybdopterin biosynthesis. Functionally, catalyzes the conversion of (8S)-3',8-cyclo-7,8-dihydroguanosine 5'-triphosphate to cyclic pyranopterin monophosphate (cPMP). The chain is Probable cyclic pyranopterin monophosphate synthase from Sulfolobus acidocaldarius (strain ATCC 33909 / DSM 639 / JCM 8929 / NBRC 15157 / NCIMB 11770).